Consider the following 331-residue polypeptide: Ferredoxin--NADP reductase (331 aa).

Positions 34, 42, 47, 87, 120, 285, and 325 each coordinate FAD.

Belongs to the ferredoxin--NADP reductase type 2 family. Homodimer. FAD is required as a cofactor.

The enzyme catalyses 2 reduced [2Fe-2S]-[ferredoxin] + NADP(+) + H(+) = 2 oxidized [2Fe-2S]-[ferredoxin] + NADPH. This Levilactobacillus brevis (strain ATCC 367 / BCRC 12310 / CIP 105137 / JCM 1170 / LMG 11437 / NCIMB 947 / NCTC 947) (Lactobacillus brevis) protein is Ferredoxin--NADP reductase.